The following is a 372-amino-acid chain: Testis-specific serine/threonine-protein kinase 5 (372 aa).

A Protein kinase domain is found at 27 to 302; that stretch reads LLSSKKIGSG…LQQVAAHCWM (276 aa). ATP contacts are provided by residues 33-41 and Lys72; that span reads IGSGAFSKV. Asp173 serves as the catalytic Proton acceptor. Residues 314–372 form a disordered region; the sequence is GAPREQDHSWSTVAPDNTEPDRDTRHARSKGSSSSSGRTSPRRPSLAQLCNTWKPAPEQ. Residues 343-358 show a composition bias toward low complexity; the sequence is KGSSSSSGRTSPRRPS.

It belongs to the protein kinase superfamily. CAMK Ser/Thr protein kinase family. The cofactor is Mg(2+). Post-translationally, autophosphorylated.

The catalysed reaction is L-seryl-[protein] + ATP = O-phospho-L-seryl-[protein] + ADP + H(+). It carries out the reaction L-threonyl-[protein] + ATP = O-phospho-L-threonyl-[protein] + ADP + H(+). Its activity is regulated as follows. Activated by phosphorylation on Thr-207, potentially by autophosphorylation. May be involved in a signaling pathway during male germ cell development or mature sperm function. This chain is Testis-specific serine/threonine-protein kinase 5, found in Mus musculus (Mouse).